The sequence spans 304 residues: MQQATGNELLGILDLDNDIDFETAYQMLSSNFDDQMSAHIHENTFSATSPPLLTHELGIIPNVATVQPSHVETIPADNQTHHAPLHTHAHYLNHNPHQPSMGFDQALGLKLSPSSSGLLSTNESNAIEQFLDNLISQDMMSSNASMNSESHLHIRSPKKQHRYTELNQRYPETHPHSNTGELPTNTADVPTEFTTREGPHQPIGNDHYNPPPFSVPEIRIPDSDIPANIEDDPVKVRKWKHVQMEKIRRINTKEAFERLIKSVRTPPKENGKRIPKHILLTCVMNDIKSIRSANEALQHILDDS.

One can recognise a bHLH domain in the interval Val236–Ile290.

As to quaternary structure, efficient DNA binding requires dimerization with another bHLH protein.

It localises to the nucleus. Functionally, positive regulatory factor required for depression of the coregulated phospholipid biosynthetic enzymes. Also involved in the expression of ITR1. In Saccharomyces cerevisiae (strain ATCC 204508 / S288c) (Baker's yeast), this protein is Protein INO2 (INO2).